Here is a 546-residue protein sequence, read N- to C-terminus: MNSNTKIIFVTGGVVSSLGKGVTAASLATLLESRGLNVTMMKLDPYINVDPGTMSPLQHGEVFVTEDGAETDLDLGHYERFIRNKMTQANNFTTGKVYQSVLRRERKGDYLGATIQVIPHITDEIKRRICSGIADDVDVAIVEIGGTVGDIESQPFLEAIRQLRIELGRNRTLFVHLTLLPYIKVAGEIKTKPTQHSVKELRGIGIQADVLVCRCEKKFDDSEKRKIALFTNVDQDCIFTAEDVDTIYEVPLKYNQQGFDAKLVELLNLNAKEADLSEWQNVVNTIRDVKGEVTIAMVGKYVSLTEAYKSLNEALYNAGYKKGVKVKIKFVDSEDVNENNVESYFKDVAAILVPGGFGSRGVEGKIISIKYARENQIPFLGICLGMQLAVIEYARNILGIKDAHSSELEPTTANPVIGLITEWQAEDGTVHQRTHSSDLGGTMRLGGYKCVLKQGSRAREIYQADEVVERHRHRYEVNSNYVERLEEAGLIFSGRSEDNKLMELIEIPQHKWFIACQAHPEFTSTPRYGHKLFESYIQAAIENSNN.

An amidoligase domain region spans residues 1–269; the sequence is MNSNTKIIFV…DAKLVELLNL (269 aa). Residue S16 coordinates CTP. Position 16 (S16) interacts with UTP. ATP-binding positions include 17–22 and D74; that span reads SLGKGV. 2 residues coordinate Mg(2+): D74 and E143. CTP contacts are provided by residues 150-152, 190-195, and K226; these read DIE and KTKPTQ. UTP is bound by residues 190-195 and K226; that span reads KTKPTQ. The 253-residue stretch at 294 to 546 folds into the Glutamine amidotransferase type-1 domain; it reads TIAMVGKYVS…IQAAIENSNN (253 aa). G356 serves as a coordination point for L-glutamine. C383 functions as the Nucleophile; for glutamine hydrolysis in the catalytic mechanism. L-glutamine is bound by residues 384–387, E407, and R474; that span reads LGMQ. Catalysis depends on residues H519 and E521.

The protein belongs to the CTP synthase family. As to quaternary structure, homotetramer.

The enzyme catalyses UTP + L-glutamine + ATP + H2O = CTP + L-glutamate + ADP + phosphate + 2 H(+). It catalyses the reaction L-glutamine + H2O = L-glutamate + NH4(+). It carries out the reaction UTP + NH4(+) + ATP = CTP + ADP + phosphate + 2 H(+). Its pathway is pyrimidine metabolism; CTP biosynthesis via de novo pathway; CTP from UDP: step 2/2. Its activity is regulated as follows. Allosterically activated by GTP, when glutamine is the substrate; GTP has no effect on the reaction when ammonia is the substrate. The allosteric effector GTP functions by stabilizing the protein conformation that binds the tetrahedral intermediate(s) formed during glutamine hydrolysis. Inhibited by the product CTP, via allosteric rather than competitive inhibition. In terms of biological role, catalyzes the ATP-dependent amination of UTP to CTP with either L-glutamine or ammonia as the source of nitrogen. Regulates intracellular CTP levels through interactions with the four ribonucleotide triphosphates. This Francisella tularensis subsp. tularensis (strain FSC 198) protein is CTP synthase.